Here is a 131-residue protein sequence, read N- to C-terminus: Small ribosomal subunit protein uS8 (131 aa).

It belongs to the universal ribosomal protein uS8 family. In terms of assembly, part of the 30S ribosomal subunit. Contacts proteins S5 and S12.

Its function is as follows. One of the primary rRNA binding proteins, it binds directly to 16S rRNA central domain where it helps coordinate assembly of the platform of the 30S subunit. The sequence is that of Small ribosomal subunit protein uS8 from Sulfurovum sp. (strain NBC37-1).